The following is a 443-amino-acid chain: Xaa-Pro dipeptidase (443 aa).

Mn(2+) contacts are provided by D246, D257, H339, E384, and E423.

This sequence belongs to the peptidase M24B family. Bacterial-type prolidase subfamily. Mn(2+) serves as cofactor.

The catalysed reaction is Xaa-L-Pro dipeptide + H2O = an L-alpha-amino acid + L-proline. Splits dipeptides with a prolyl residue in the C-terminal position. In Escherichia coli O157:H7, this protein is Xaa-Pro dipeptidase.